The sequence spans 142 residues: Alpha-lactalbumin (142 aa).

Positions 1–19 (MMSFVSLLLVGILFHATQA) are cleaved as a signal peptide. Residues 20–142 (EQLTKCEVFR…KLDQWLCEKL (123 aa)) enclose the C-type lysozyme domain. Intrachain disulfides connect cysteine 25–cysteine 139, cysteine 47–cysteine 130, cysteine 80–cysteine 96, and cysteine 92–cysteine 110. N-linked (GlcNAc...) asparagine glycosylation occurs at asparagine 64. Residues lysine 98, aspartate 101, aspartate 103, aspartate 106, and aspartate 107 each contribute to the Ca(2+) site.

Belongs to the glycosyl hydrolase 22 family. Lactose synthase (LS) is a heterodimer of a catalytic component, beta1,4-galactosyltransferase (beta4Gal-T1) and a regulatory component, alpha-lactalbumin (LA). In terms of tissue distribution, mammary gland specific. Secreted in milk.

It localises to the secreted. In terms of biological role, regulatory subunit of lactose synthase, changes the substrate specificity of galactosyltransferase in the mammary gland making glucose a good acceptor substrate for this enzyme. This enables LS to synthesize lactose, the major carbohydrate component of milk. In other tissues, galactosyltransferase transfers galactose onto the N-acetylglucosamine of the oligosaccharide chains in glycoproteins. In Bos taurus (Bovine), this protein is Alpha-lactalbumin (LALBA).